We begin with the raw amino-acid sequence, 306 residues long: Porphobilinogen deaminase (306 aa).

Residue Cys-234 is modified to S-(dipyrrolylmethanemethyl)cysteine.

It belongs to the HMBS family. As to quaternary structure, monomer. Dipyrromethane serves as cofactor.

It catalyses the reaction 4 porphobilinogen + H2O = hydroxymethylbilane + 4 NH4(+). Its pathway is porphyrin-containing compound metabolism; protoporphyrin-IX biosynthesis; coproporphyrinogen-III from 5-aminolevulinate: step 2/4. In terms of biological role, tetrapolymerization of the monopyrrole PBG into the hydroxymethylbilane pre-uroporphyrinogen in several discrete steps. The chain is Porphobilinogen deaminase from Mycobacteroides abscessus (strain ATCC 19977 / DSM 44196 / CCUG 20993 / CIP 104536 / JCM 13569 / NCTC 13031 / TMC 1543 / L948) (Mycobacterium abscessus).